A 357-amino-acid polypeptide reads, in one-letter code: Alanine racemase (357 aa).

The Proton acceptor; specific for D-alanine role is filled by K33. The residue at position 33 (K33) is an N6-(pyridoxal phosphate)lysine. A substrate-binding site is contributed by R130. The active-site Proton acceptor; specific for L-alanine is the Y252. M300 serves as a coordination point for substrate.

Belongs to the alanine racemase family. Requires pyridoxal 5'-phosphate as cofactor.

It carries out the reaction L-alanine = D-alanine. Its pathway is amino-acid biosynthesis; D-alanine biosynthesis; D-alanine from L-alanine: step 1/1. In terms of biological role, catalyzes the interconversion of L-alanine and D-alanine. May also act on other amino acids. The chain is Alanine racemase (alr) from Acidiphilium cryptum (strain JF-5).